The chain runs to 429 residues: Aspartate--tRNA(Asp/Asn) ligase (429 aa).

Glutamate 166 lines the L-aspartate pocket. The segment at 188 to 191 is aspartate; sequence QLYK. L-aspartate is bound at residue arginine 210. ATP contacts are provided by residues 210-212, 218-220, and glutamate 352; these read RAE and RHL. Glutamate 352 and serine 355 together coordinate Mg(2+). Serine 355 and arginine 359 together coordinate L-aspartate. 400–403 provides a ligand contact to ATP; it reads GIER.

It belongs to the class-II aminoacyl-tRNA synthetase family. Type 2 subfamily. As to quaternary structure, homodimer. Requires Mg(2+) as cofactor.

It is found in the cytoplasm. It carries out the reaction tRNA(Asx) + L-aspartate + ATP = L-aspartyl-tRNA(Asx) + AMP + diphosphate. Aspartyl-tRNA synthetase with relaxed tRNA specificity since it is able to aspartylate not only its cognate tRNA(Asp) but also tRNA(Asn). Reaction proceeds in two steps: L-aspartate is first activated by ATP to form Asp-AMP and then transferred to the acceptor end of tRNA(Asp/Asn). The sequence is that of Aspartate--tRNA(Asp/Asn) ligase from Methanoculleus marisnigri (strain ATCC 35101 / DSM 1498 / JR1).